A 396-amino-acid polypeptide reads, in one-letter code: Phosphoglycerate kinase (396 aa).

Residues 21–23, R36, 59–62, R119, and R156 contribute to the substrate site; these read DFN and HLGK. Residues K206, E325, and 352-355 contribute to the ATP site; that span reads GGDS.

The protein belongs to the phosphoglycerate kinase family. In terms of assembly, monomer.

The protein localises to the cytoplasm. It catalyses the reaction (2R)-3-phosphoglycerate + ATP = (2R)-3-phospho-glyceroyl phosphate + ADP. Its pathway is carbohydrate degradation; glycolysis; pyruvate from D-glyceraldehyde 3-phosphate: step 2/5. This Staphylococcus carnosus (strain TM300) protein is Phosphoglycerate kinase.